The sequence spans 543 residues: Zinc finger protein tra-4 (543 aa).

The segment at 1–38 (MDDPNQCTIKQEDSITRPRPTEAPTIQNLKQEPAIEEG) is disordered. Over residues 10–20 (KQEDSITRPRP) the composition is skewed to basic and acidic residues. 7 C2H2-type zinc fingers span residues 218–241 (VRCK…RDKH), 327–350 (PQCP…AKKH), 381–406 (YVCF…KKFH), 413–436 (FRCS…KMSH), 442–464 (FQCH…ERMH), 470–493 (FECK…RDEH), and 495–518 (YVCA…YEEH).

It belongs to the krueppel C2H2-type zinc-finger protein family. Interacts with histone deacetylase hda-1. May interact with nasp-1.

The protein localises to the nucleus. Functionally, probable transcription factor. Promotes normal hermaphrodite (XX) development, in concert with histone deacetylase hda-1 and nasp-1, perhaps as components of a complex. May cooperate with transcription factor tra-1 to repress male-specific genes in hermaphrodites. Synthetic multivulva (synMuv) class B protein, required to repress the induction of vulval development by let-60 Ras signaling. The polypeptide is Zinc finger protein tra-4 (Caenorhabditis elegans).